Consider the following 186-residue polypeptide: ATP synthase subunit delta (186 aa).

Belongs to the ATPase delta chain family. As to quaternary structure, F-type ATPases have 2 components, F(1) - the catalytic core - and F(0) - the membrane proton channel. F(1) has five subunits: alpha(3), beta(3), gamma(1), delta(1), epsilon(1). CF(0) has four main subunits: a(1), b(1), b'(1) and c(10-14). The alpha and beta chains form an alternating ring which encloses part of the gamma chain. F(1) is attached to F(0) by a central stalk formed by the gamma and epsilon chains, while a peripheral stalk is formed by the delta, b and b' chains.

The protein resides in the cell inner membrane. F(1)F(0) ATP synthase produces ATP from ADP in the presence of a proton or sodium gradient. F-type ATPases consist of two structural domains, F(1) containing the extramembraneous catalytic core and F(0) containing the membrane proton channel, linked together by a central stalk and a peripheral stalk. During catalysis, ATP synthesis in the catalytic domain of F(1) is coupled via a rotary mechanism of the central stalk subunits to proton translocation. Its function is as follows. This protein is part of the stalk that links CF(0) to CF(1). It either transmits conformational changes from CF(0) to CF(1) or is implicated in proton conduction. This chain is ATP synthase subunit delta, found in Rhodopseudomonas palustris (strain ATCC BAA-98 / CGA009).